A 302-amino-acid chain; its full sequence is L-threonate dehydrogenase (302 aa).

Residues 7 to 35 and threonine 102 each bind NAD(+); that span reads FHVG…TWGA. The active site involves lysine 178. Lysine 246 is an NAD(+) binding site.

Belongs to the HIBADH-related family. L-threonate dehydrogenase subfamily.

The enzyme catalyses L-threonate + NAD(+) = 2-dehydro-L-erythronate + NADH + H(+). In terms of biological role, catalyzes oxidation of L-threonate to 2-oxo-tetronate. Can use either NAD(+) or NADP(+) as cosubstrate, with a preference for NAD(+). This is L-threonate dehydrogenase from Escherichia coli O6:H1 (strain CFT073 / ATCC 700928 / UPEC).